A 186-amino-acid polypeptide reads, in one-letter code: Ribosome rescue factor SmrB (186 aa).

The Smr domain maps to 99 to 174 (IDLHGLTQHQ…SDAAIIVIIE (76 aa)).

This sequence belongs to the SmrB family. As to quaternary structure, associates with collided ribosomes, but not with correctly translating polysomes.

Acts as a ribosome collision sensor. Detects stalled/collided disomes (pairs of ribosomes where the leading ribosome is stalled and a second ribosome has collided with it) and endonucleolytically cleaves mRNA at the 5' boundary of the stalled ribosome. Stalled/collided disomes form a new interface (primarily via the 30S subunits) that binds SmrB. Cleaved mRNA becomes available for tmRNA ligation, leading to ribosomal subunit dissociation and rescue of stalled ribosomes. This chain is Ribosome rescue factor SmrB, found in Buchnera aphidicola subsp. Acyrthosiphon pisum (strain Tuc7).